The sequence spans 284 residues: MLTLPAPAKLNLMLHIVGRRADGYHELQTLFQFLDHGDELSFSPREDGEIRLHTELPGVDHDSNLIVRAARLLQHESGCPQGADIHLLKRLPMGGGIGGGSSDAATALLGLNHLWQLHLEEDQLAELGLTLGADVPVFVRGRAAFAEGVGERLQPVELPEPWFLVIAPQVSVSTAEIFADPELTRNTPAITVRSLLAGGGHNDCQPIVEKRYPEVRNALSLLNKFVPASMTGTGACVFGSFPNEGEADKVRRQLPDTLPSFVARGRNVSMLHRCLEKLAQEVSA.

The active site involves lysine 9. 92–102 lines the ATP pocket; that stretch reads PMGGGIGGGSS. Residue aspartate 134 is part of the active site.

This sequence belongs to the GHMP kinase family. IspE subfamily.

The catalysed reaction is 4-CDP-2-C-methyl-D-erythritol + ATP = 4-CDP-2-C-methyl-D-erythritol 2-phosphate + ADP + H(+). The protein operates within isoprenoid biosynthesis; isopentenyl diphosphate biosynthesis via DXP pathway; isopentenyl diphosphate from 1-deoxy-D-xylulose 5-phosphate: step 3/6. Catalyzes the phosphorylation of the position 2 hydroxy group of 4-diphosphocytidyl-2C-methyl-D-erythritol. This chain is 4-diphosphocytidyl-2-C-methyl-D-erythritol kinase, found in Stutzerimonas stutzeri (strain A1501) (Pseudomonas stutzeri).